Consider the following 656-residue polypeptide: FAST kinase domain-containing protein 3, mitochondrial (656 aa).

Residues 587–645 (VALCIDGPQRFCLGSKHLLGKEAIKQRHLRLLGYQVVQVPYHELELLTSRLELVDYLQR) enclose the RAP domain.

Belongs to the FAST kinase family.

It localises to the mitochondrion. Functionally, required for normal mitochondrial respiration. Increases steady-state levels and half-lives of a subset of mature mitochondrial mRNAs MT-ND2, MT-ND3, MT-CYTB, MT-CO2, and MT-ATP8/6. Promotes MT-CO1 mRNA translation and increases mitochondrial complex IV assembly and activity. The polypeptide is FAST kinase domain-containing protein 3, mitochondrial (Fastkd3) (Rattus norvegicus (Rat)).